The primary structure comprises 669 residues: Trissin receptor (669 aa).

Positions 1–15 are enriched in polar residues; the sequence is MIMTMMQTVRAWQQE. Positions 1–90 are disordered; it reads MIMTMMQTVR…PTGQQPPRLP (90 aa). Topologically, residues 1–184 are extracellular; the sequence is MIMTMMQTVR…EYIFDRTDVR (184 aa). Residues 55 to 74 are compositionally biased toward low complexity; it reads NQNNGSPNSSPNQSTSAFRQ. N-linked (GlcNAc...) asparagine glycosylation occurs at asparagine 66. Positions 79–89 are enriched in pro residues; it reads HPPTGQQPPRL. N-linked (GlcNAc...) asparagine glycans are attached at residues asparagine 120 and asparagine 130. A helical membrane pass occupies residues 185–205; the sequence is IIFITLYTLVFCCCFFGNLLV. The Cytoplasmic portion of the chain corresponds to 206–217; it reads ILVVTLSRRLRS. Residues 218–238 traverse the membrane as a helical segment; that stretch reads ITNFFLANLAFADFCVGLFCV. Residues 239–269 are Extracellular-facing; sequence MQNLSIYLIESWVFGEFLCRMYQFVHSLSYT. Asparagine 241 carries N-linked (GlcNAc...) asparagine glycosylation. Cysteine 257 and cysteine 340 are oxidised to a cystine. The helical transmembrane segment at 270-290 threads the bilayer; it reads ASIFILVVICMERYFAIVHPI. Topologically, residues 291 to 302 are cytoplasmic; that stretch reads TCKQILTAARLR. Residues 303–323 form a helical membrane-spanning segment; that stretch reads MVIVTVWITSAVYSTPKFVFS. The Extracellular portion of the chain corresponds to 324 to 350; that stretch reads KTIKNIHTQDGQEEEICVLDREMFNSK. The helical transmembrane segment at 351 to 371 threads the bilayer; the sequence is LLDMINFVLLYVMPLLVMTVL. Over 372-552 the chain is Cytoplasmic; sequence YSKIAIALWR…SSNVLRARRG (181 aa). Positions 390–401 are enriched in low complexity; that stretch reads VVQHQHQQPQQP. Disordered regions lie at residues 390–481 and 515–537; these read VVQH…RGVS and AHHQ…AGAT. The segment covering 414–429 has biased composition (basic residues); it reads MYHHHPHHHHHHHQHH. Residues 441–454 are compositionally biased toward gly residues; it reads VGVGLGGGGGGGPG. Over residues 455 to 470 the composition is skewed to low complexity; it reads PSLASGGSSTTSLSRK. The segment covering 524 to 534 has biased composition (gly residues); sequence SVGGGSGGAGA. The chain crosses the membrane as a helical span at residues 553–573; sequence VVRMLIIFVLTFALCNLPYHA. Residues 574–595 lie on the Extracellular side of the membrane; sequence RKMWQYWSRSYRGDSNFNALLT. Residues 596 to 616 traverse the membrane as a helical segment; the sequence is PLTFLVTYFNSGVNPLLYAFL. At 617 to 669 the chain is on the cytoplasmic side; the sequence is SRNFRKGMKELLLCSWKKGKGKSSSNSSMHHKRKALQTHSLPTDTTHIGNEQL. The disordered stretch occupies residues 635–669; sequence GKGKSSSNSSMHHKRKALQTHSLPTDTTHIGNEQL. The segment covering 653 to 669 has biased composition (polar residues); that stretch reads QTHSLPTDTTHIGNEQL.

This sequence belongs to the G-protein coupled receptor 1 family.

It localises to the cell membrane. Its function is as follows. G-protein coupled receptor which is activated by the Trissin peptide in vitro, leading to increased intracellular calcium ion levels. This chain is Trissin receptor, found in Drosophila melanogaster (Fruit fly).